We begin with the raw amino-acid sequence, 258 residues long: Tryptophan synthase alpha chain (258 aa).

Catalysis depends on proton acceptor residues Glu47 and Asp58.

This sequence belongs to the TrpA family. As to quaternary structure, tetramer of two alpha and two beta chains.

It carries out the reaction (1S,2R)-1-C-(indol-3-yl)glycerol 3-phosphate + L-serine = D-glyceraldehyde 3-phosphate + L-tryptophan + H2O. Its pathway is amino-acid biosynthesis; L-tryptophan biosynthesis; L-tryptophan from chorismate: step 5/5. Its function is as follows. The alpha subunit is responsible for the aldol cleavage of indoleglycerol phosphate to indole and glyceraldehyde 3-phosphate. This is Tryptophan synthase alpha chain from Bacillus anthracis (strain CDC 684 / NRRL 3495).